Consider the following 336-residue polypeptide: Glucokinase (336 aa).

13 to 18 is a binding site for ATP; that stretch reads ADVGGT.

Belongs to the bacterial glucokinase family.

The protein localises to the cytoplasm. The enzyme catalyses D-glucose + ATP = D-glucose 6-phosphate + ADP + H(+). The sequence is that of Glucokinase from Cupriavidus metallidurans (strain ATCC 43123 / DSM 2839 / NBRC 102507 / CH34) (Ralstonia metallidurans).